The chain runs to 398 residues: Leucine aminopeptidase 1 (398 aa).

A signal peptide spans 1 to 20 (MKFLQTSLIAAALPAALVSG). A propeptide spanning residues 21 to 87 (RFVIENEGDN…LRAWTQSQAS (67 aa)) is cleaved from the precursor. N-linked (GlcNAc...) asparagine glycosylation is present at Asn-179. Zn(2+) is bound by residues His-187, Asp-206, Glu-245, and Asp-272. The cysteines at positions 321 and 325 are disulfide-linked. Residue His-354 coordinates Zn(2+).

It belongs to the peptidase M28 family. M28E subfamily. Monomer. The cofactor is Zn(2+).

It localises to the secreted. Its function is as follows. Extracellular aminopeptidase that allows assimilation of proteinaceous substrates. This chain is Leucine aminopeptidase 1 (lap1), found in Trichoderma harzianum (Hypocrea lixii).